The following is a 365-amino-acid chain: Ribosomal RNA large subunit methyltransferase F (365 aa).

Positions 1–50 (MSKPAVKSVPSATAKTATRAANPRQKAKAPKQAKPEGKGRAKPSKDKPRA) are disordered. Residues 33–50 (AKPEGKGRAKPSKDKPRA) are compositionally biased toward basic and acidic residues.

Belongs to the methyltransferase superfamily. METTL16/RlmF family.

It localises to the cytoplasm. It catalyses the reaction adenosine(1618) in 23S rRNA + S-adenosyl-L-methionine = N(6)-methyladenosine(1618) in 23S rRNA + S-adenosyl-L-homocysteine + H(+). Functionally, specifically methylates the adenine in position 1618 of 23S rRNA. This is Ribosomal RNA large subunit methyltransferase F from Shewanella baltica (strain OS195).